The chain runs to 874 residues: DNA mismatch repair protein MutS (874 aa).

Residues 1–12 (MSNDRPLTHSEA) show a composition bias toward basic and acidic residues. The interval 1 to 20 (MSNDRPLTHSEAESSALRLG) is disordered. Residue 661–668 (GPNASGKS) coordinates ATP. The tract at residues 854 to 874 (RKSSMGDPPTAPEINQGELPF) is disordered.

The protein belongs to the DNA mismatch repair MutS family.

Its function is as follows. This protein is involved in the repair of mismatches in DNA. It is possible that it carries out the mismatch recognition step. This protein has a weak ATPase activity. This Thermosynechococcus vestitus (strain NIES-2133 / IAM M-273 / BP-1) protein is DNA mismatch repair protein MutS.